We begin with the raw amino-acid sequence, 187 residues long: Acetyl-CoA decarbonylase/synthase complex subunit epsilon (187 aa).

Blocked amino end (Met) is present on methionine 1.

Belongs to the CdhB family. In terms of assembly, heterotetramer of two alpha and two epsilon subunits. The ACDS complex is made up of alpha, epsilon, beta, gamma and delta subunits with a probable stoichiometry of (alpha(2)epsilon(2))(4)-beta(8)-(gamma(1)delta(1))(8).

Its function is as follows. Part of a complex that catalyzes the reversible cleavage of acetyl-CoA, allowing autotrophic growth from CO(2). The alpha-epsilon subcomponent functions as a carbon monoxide dehydrogenase. The precise role of the epsilon subunit is unclear; it may have a stabilizing role within the alpha(2)epsilon(2) component and/or be involved in electron transfer to FAD during a potential FAD-mediated CO oxidation. In Methanothrix soehngenii (Methanosaeta concilii), this protein is Acetyl-CoA decarbonylase/synthase complex subunit epsilon.